A 476-amino-acid polypeptide reads, in one-letter code: Beta-xylosidase (476 aa).

The active-site Proton donor is the glutamate 188. Catalysis depends on glutamate 292, which acts as the Nucleophile. The N-linked (GlcNAc...) asparagine glycan is linked to asparagine 468.

Belongs to the glycosyl hydrolase 5 (cellulase A) family.

It localises to the secreted. The enzyme catalyses Hydrolysis of (1-&gt;4)-beta-D-xylans, to remove successive D-xylose residues from the non-reducing termini.. In terms of biological role, catalyzes the hydrolysis of xylo-oligomers to xylose units and plays an important role in xylan degradation. Can also perform the transglycosylation of xylose and alcohol. Has no endoglucanase activity. This is Beta-xylosidase from Phanerodontia chrysosporium (White-rot fungus).